The sequence spans 385 residues: 1-deoxy-D-xylulose 5-phosphate reductoisomerase (385 aa).

Positions 10, 11, 12, 13, 37, and 124 each coordinate NADPH. A 1-deoxy-D-xylulose 5-phosphate-binding site is contributed by K125. E126 provides a ligand contact to NADPH. D150 is a Mn(2+) binding site. Residues S151, E152, S176, and H199 each coordinate 1-deoxy-D-xylulose 5-phosphate. E152 contacts Mn(2+). G205 is an NADPH binding site. The 1-deoxy-D-xylulose 5-phosphate site is built by S212, N217, K218, and E221. E221 contacts Mn(2+).

This sequence belongs to the DXR family. Mg(2+) serves as cofactor. Mn(2+) is required as a cofactor.

The catalysed reaction is 2-C-methyl-D-erythritol 4-phosphate + NADP(+) = 1-deoxy-D-xylulose 5-phosphate + NADPH + H(+). Its pathway is isoprenoid biosynthesis; isopentenyl diphosphate biosynthesis via DXP pathway; isopentenyl diphosphate from 1-deoxy-D-xylulose 5-phosphate: step 1/6. Its function is as follows. Catalyzes the NADPH-dependent rearrangement and reduction of 1-deoxy-D-xylulose-5-phosphate (DXP) to 2-C-methyl-D-erythritol 4-phosphate (MEP). This chain is 1-deoxy-D-xylulose 5-phosphate reductoisomerase, found in Clostridium botulinum (strain Langeland / NCTC 10281 / Type F).